The sequence spans 289 residues: Stress response regulator protein 1 (289 aa).

A disordered region spans residues 77-136 (LDCTNSEMDEEDDFEDDEDDENLGLINPLHHKSSHGQISDYSPLTPFTEPPSASLSKPSF). Acidic residues predominate over residues 83 to 98 (EMDEEDDFEDDEDDEN). The segment covering 127 to 136 (PSASLSKPSF) has biased composition (polar residues). In terms of domain architecture, Response regulatory spans 163-281 (NFLIVDDNII…YDFVMDRIDE (119 aa)). Asp-214 bears the 4-aspartylphosphate mark.

Functionally, required for stress adaptation, morphogenesis and virulence. This chain is Stress response regulator protein 1 (SRR1), found in Scheffersomyces stipitis (strain ATCC 58785 / CBS 6054 / NBRC 10063 / NRRL Y-11545) (Yeast).